The primary structure comprises 1211 residues: Homeodomain-interacting protein kinase 1 (1211 aa).

A Glycyl lysine isopeptide (Lys-Gly) (interchain with G-Cter in SUMO); alternate cross-link involves residue lysine 25. Residue lysine 25 forms a Glycyl lysine isopeptide (Lys-Gly) (interchain with G-Cter in SUMO2); alternate linkage. Glycyl lysine isopeptide (Lys-Gly) (interchain with G-Cter in SUMO2) cross-links involve residues lysine 120 and lysine 124. Residues 190-518 form the Protein kinase domain; it reads YEVLEFLGRG…PLKTLNHQFV (329 aa). ATP-binding positions include 196–204 and lysine 219; that span reads LGRGTFGQV. Catalysis depends on aspartate 315, which acts as the Proton acceptor. The interval 835-856 is disordered; the sequence is QQQSSSLPSRKNKQSAPVSSTS. The short motif at 844 to 847 is the Nuclear localization signal 1 (NLS1) element; that stretch reads RKNK. At serine 872 the chain carries Phosphoserine. The segment at 885 to 1094 is interaction with TP53; sequence PVQDQHQPII…FQHGSPLHST (210 aa). A required for localization to nuclear speckles region spans residues 891–998; that stretch reads QPIIIPDTPS…PLKTQLGDCT (108 aa). The tract at residues 902–926 is SUMO interaction motifs (SIM); required for nuclear localization and kinase activity; sequence PVSVITIRSDTDEEEDNKFKPSSSS. A Glycyl lysine isopeptide (Lys-Gly) (interchain with G-Cter in SUMO2) cross-link involves residue lysine 991. Disordered stretches follow at residues 1002 to 1023, 1047 to 1070, and 1085 to 1105; these read QASG…GQSS, LSQN…APRR, and FQHG…APAH. Low complexity-rich tracts occupy residues 1048-1064 and 1096-1105; these read SQNQ…ERSS and HPHLAPAPAH. At serine 1201 the chain carries Phosphoserine. Lysine 1204 participates in a covalent cross-link: Glycyl lysine isopeptide (Lys-Gly) (interchain with G-Cter in SUMO).

It belongs to the protein kinase superfamily. CMGC Ser/Thr protein kinase family. HIPK subfamily. In terms of assembly, interacts with Nkx1-2, Nkx2-5, MYB, PARK7, DAXX and p53/TP53. Part of a cytoplasmic complex made of HIPK1, DAB2IP and MAP3K5 in response to TNF. This complex formation promotes MAP3K5-JNK activation and subsequent apoptosis. Phosphorylated and activated by JNK1. Autophosphorylated. Post-translationally, sumoylated. When conjugated it is directed to nuclear speckles. SENP1-mediated desumoylation is mediated by TNF in response to stress stimuli, triggering transient translocation from nucleus to cytoplasm.

The protein localises to the nucleus. It is found in the cytoplasm. The protein resides in the nucleus speckle. The catalysed reaction is L-seryl-[protein] + ATP = O-phospho-L-seryl-[protein] + ADP + H(+). It catalyses the reaction L-threonyl-[protein] + ATP = O-phospho-L-threonyl-[protein] + ADP + H(+). Functionally, serine/threonine-protein kinase involved in transcription regulation and TNF-mediated cellular apoptosis. Plays a role as a corepressor for homeodomain transcription factors. Phosphorylates DAXX and MYB. Phosphorylates DAXX in response to stress, and mediates its translocation from the nucleus to the cytoplasm. Inactivates MYB transcription factor activity by phosphorylation. Prevents MAP3K5-JNK activation in the absence of TNF. TNF triggers its translocation to the cytoplasm in response to stress stimuli, thus activating nuclear MAP3K5-JNK by derepression and promoting apoptosis. May be involved in anti-oxidative stress responses. Involved in the regulation of eye size, lens formation and retinal lamination during late embryogenesis. Promotes angiogenesis and to be involved in erythroid differentiation. May be involved in malignant squamous cell tumor formation. Phosphorylates PAGE4 at 'Thr-51' which is critical for the ability of PAGE4 to potentiate the transcriptional activator activity of JUN. In Rattus norvegicus (Rat), this protein is Homeodomain-interacting protein kinase 1.